We begin with the raw amino-acid sequence, 623 residues long: MFEKQYDVIVVGAGHAGSEAAAAAANMGSKTLLITMNLQNIAQMSCNPAMGGIAKGQIVREIDAMGGYSGIVSDTSAIQFKMLNKSKGPAMWSPRVQSDRMRFAEDWRLKLEGTPNLDFYQEMVAGLIIENDKVIGVRTSLGLEVFAKSVVCTNGTFLNGLIHIGDKQFGGGRAGERAATGITKDLIEVGFEAGRMKTGTPPRVDGRSLDYSKMTEQPGDDIPGKFSYSDETKPLSKQRSCHMTYTSNEVHDILKEGFDRSPMFNGRIQSIGPRYCPSIEDKINRFADKDRHQLFVEPEGWNTVEVYVNGFSTSLPEDVQFKALRSVAGFENVKFFRPGYAIEYDYFPPTQLKHTLETKLVEGLYFAGQINGTTGYEEAACQGMMAGINAALKVQEKDEFILKRNEAYIGVLIDDLITKGTEEPYRMFTSRAEYRTLLRQDNADFRLTERSYNLGLASEKRMRKMEEKKDKSLKFVQYLKDLSVVPEEANPVLEKRNSSPMKQSDKVFKVFSRPQITMEDVKNFSGVEEFISENELNEEMIEQTEIQVKYSGYIEKEKNNADKLNRLEDMKIPKNFDYSNIKSMSYEAREKLKKVQPATVSQASRISGVSPNDISVLLVYMGR.

Residue 12 to 17 (GAGHAG) coordinates FAD. 272–286 (GPRYCPSIEDKINRF) contacts NAD(+).

The protein belongs to the MnmG family. In terms of assembly, homodimer. Heterotetramer of two MnmE and two MnmG subunits. The cofactor is FAD.

The protein localises to the cytoplasm. Its function is as follows. NAD-binding protein involved in the addition of a carboxymethylaminomethyl (cmnm) group at the wobble position (U34) of certain tRNAs, forming tRNA-cmnm(5)s(2)U34. This Christiangramia forsetii (strain DSM 17595 / CGMCC 1.15422 / KT0803) (Gramella forsetii) protein is tRNA uridine 5-carboxymethylaminomethyl modification enzyme MnmG.